Consider the following 727-residue polypeptide: Phosphoribosylformylglycinamidine synthase subunit PurL (727 aa).

The active site involves His47. ATP-binding residues include Tyr50 and Lys82. Glu84 is a Mg(2+) binding site. Residues 85 to 88 (SHNH) and Arg107 contribute to the substrate site. His86 serves as the catalytic Proton acceptor. Asp108 is a Mg(2+) binding site. A substrate-binding site is contributed by Gln229. Residue Asp257 participates in Mg(2+) binding. Residue 301–303 (ESQ) participates in substrate binding. Residues Asp486 and Gly523 each coordinate ATP. Asn524 serves as a coordination point for Mg(2+). Ser526 is a binding site for substrate.

This sequence belongs to the FGAMS family. As to quaternary structure, monomer. Part of the FGAM synthase complex composed of 1 PurL, 1 PurQ and 2 PurS subunits.

The protein localises to the cytoplasm. The catalysed reaction is N(2)-formyl-N(1)-(5-phospho-beta-D-ribosyl)glycinamide + L-glutamine + ATP + H2O = 2-formamido-N(1)-(5-O-phospho-beta-D-ribosyl)acetamidine + L-glutamate + ADP + phosphate + H(+). The protein operates within purine metabolism; IMP biosynthesis via de novo pathway; 5-amino-1-(5-phospho-D-ribosyl)imidazole from N(2)-formyl-N(1)-(5-phospho-D-ribosyl)glycinamide: step 1/2. Part of the phosphoribosylformylglycinamidine synthase complex involved in the purines biosynthetic pathway. Catalyzes the ATP-dependent conversion of formylglycinamide ribonucleotide (FGAR) and glutamine to yield formylglycinamidine ribonucleotide (FGAM) and glutamate. The FGAM synthase complex is composed of three subunits. PurQ produces an ammonia molecule by converting glutamine to glutamate. PurL transfers the ammonia molecule to FGAR to form FGAM in an ATP-dependent manner. PurS interacts with PurQ and PurL and is thought to assist in the transfer of the ammonia molecule from PurQ to PurL. In Petrotoga mobilis (strain DSM 10674 / SJ95), this protein is Phosphoribosylformylglycinamidine synthase subunit PurL.